Reading from the N-terminus, the 1383-residue chain is DNA-directed RNA polymerase subunit beta (1383 aa).

This sequence belongs to the RNA polymerase beta chain family. In terms of assembly, the RNAP catalytic core consists of 2 alpha, 1 beta, 1 beta' and 1 omega subunit. When a sigma factor is associated with the core the holoenzyme is formed, which can initiate transcription.

It carries out the reaction RNA(n) + a ribonucleoside 5'-triphosphate = RNA(n+1) + diphosphate. In terms of biological role, DNA-dependent RNA polymerase catalyzes the transcription of DNA into RNA using the four ribonucleoside triphosphates as substrates. The protein is DNA-directed RNA polymerase subunit beta of Bartonella quintana (strain Toulouse) (Rochalimaea quintana).